The chain runs to 461 residues: MLYDDTIAAIATPPGEGGIGIVRISGRDALKILERIFVPVRPGRWKPYQMRYGRVVDQNGAVVDEALAVFMRGPRSFTAEDTAEISVHGGPLVVERVLQQALAAGARAAAPGEFTMRAFLNGRIDLAQAEATLDIITARTTTALALAEAQLGGWLSQELHRIRDLLMDPLAYCTALVDFPEDEVDPQDIETPLTAAVQALDALVASAQHGIIYRQGARAALIGRPNAGKSSLLNALLRVDRAIVTPIPGTTRDTLEETASLGGVPVVLTDTAGIVESDDPVERLGVARSRQAVRLADLALLVVDVSLPVADDDREIVALTEEKRTILTLNKIDLIDADRSIIAARQREYEQIRGKAFDAMVTVSALTGQGLDELGATVARLLLGAPIAADGRLVTNARHRDALARAADHARDALTGFQQGVSPDLLAVDLTAAINAIGEVTGESVGEDLLHAIFSRFCIGK.

(6S)-5-formyl-5,6,7,8-tetrahydrofolate contacts are provided by R23, E84, and R123. The TrmE-type G domain maps to 216–383; that stretch reads GARAALIGRP…LGATVARLLL (168 aa). A K(+)-binding site is contributed by N226. Residues 226–231, 245–251, and 270–273 contribute to the GTP site; these read NAGKSS, TPIPGTT, and DTAG. S230 serves as a coordination point for Mg(2+). Residues T245, I247, and T250 each contribute to the K(+) site. T251 is a binding site for Mg(2+). A (6S)-5-formyl-5,6,7,8-tetrahydrofolate-binding site is contributed by K461.

This sequence belongs to the TRAFAC class TrmE-Era-EngA-EngB-Septin-like GTPase superfamily. TrmE GTPase family. Homodimer. Heterotetramer of two MnmE and two MnmG subunits. The cofactor is K(+).

Its subcellular location is the cytoplasm. Functionally, exhibits a very high intrinsic GTPase hydrolysis rate. Involved in the addition of a carboxymethylaminomethyl (cmnm) group at the wobble position (U34) of certain tRNAs, forming tRNA-cmnm(5)s(2)U34. In Roseiflexus sp. (strain RS-1), this protein is tRNA modification GTPase MnmE.